The following is a 258-amino-acid chain: MKITKLEKKKRLYLMELDNGDKCYITEDTIVRFMLSRDKVISEEELKEIQDFAQFSYGKNLALYHLSFKARTEKEVREYLKKYDIDKNIVSQVIANLKEDKWINDGQYAYAIINTNQLSGDKGPYVLTQKLSQKGISKSTIEENLKEFDFSEVAQRVANKLLKKYEGKLPARALQDKIIQNLTNKGFSYSDAKIAFDDLDSQVDQETTQELIFKELDKQYTKYARKYEGYELKQRLTQVLARKGYDFSDIASALREYL.

The protein belongs to the RecX family.

The protein localises to the cytoplasm. Modulates RecA activity. The protein is Regulatory protein RecX of Streptococcus pneumoniae (strain JJA).